Consider the following 279-residue polypeptide: Proteasome subunit alpha type-1 (279 aa).

Y103 is subject to Phosphotyrosine. A compositionally biased stretch (basic and acidic residues) spans 235–249 (HVAIAKENDNDTPRN). The segment at 235–279 (HVAIAKENDNDTPRNDDDDDRPSPPEEPAAGPRDPEVLVATEQRP) is disordered.

It belongs to the peptidase T1A family. The 26S proteasome consists of a 20S proteasome core and two 19S regulatory subunits. The 20S proteasome core is composed of 28 subunits that are arranged in four stacked rings, resulting in a barrel-shaped structure. The two end rings are each formed by seven alpha subunits, and the two central rings are each formed by seven beta subunits. The catalytic chamber with the active sites is on the inside of the barrel. Interacts with PI31.

It localises to the cytoplasm. The protein localises to the nucleus. Its function is as follows. The proteasome is a multicatalytic proteinase complex which is characterized by its ability to cleave peptides with Arg, Phe, Tyr, Leu, and Glu adjacent to the leaving group at neutral or slightly basic pH. The proteasome has an ATP-dependent proteolytic activity. The chain is Proteasome subunit alpha type-1 (Prosalpha6) from Drosophila melanogaster (Fruit fly).